Reading from the N-terminus, the 225-residue chain is Uracil-DNA glycosylase (225 aa).

Asp61 functions as the Proton acceptor in the catalytic mechanism.

It belongs to the uracil-DNA glycosylase (UDG) superfamily. UNG family.

The protein resides in the cytoplasm. It catalyses the reaction Hydrolyzes single-stranded DNA or mismatched double-stranded DNA and polynucleotides, releasing free uracil.. Its function is as follows. Excises uracil residues from the DNA which can arise as a result of misincorporation of dUMP residues by DNA polymerase or due to deamination of cytosine. This chain is Uracil-DNA glycosylase, found in Actinobacillus pleuropneumoniae serotype 5b (strain L20).